The chain runs to 328 residues: GATA transcription factor 17 (328 aa).

The tract at residues 1–68 (MSGHHEAKPY…EEYEGGEGVP (68 aa)) is disordered. The segment covering 14-29 (RGPAPADEEAAPAAAA) has biased composition (low complexity). Composition is skewed to acidic residues over residues 30-39 (DEAEAEAEVE) and 47-63 (EQEY…EYEG). One can recognise a Tify domain in the interval 100–135 (PHVASNTLTLSFQGEVYVFESVSAERVQAVLLLLGG). The CCT domain occupies 161 to 203 (RMASLMRFREKRKERNFDKKIRYTVRKEVALRMQRNRGQFTSS). Positions 198–231 (GQFTSSKSKAEEATSVITSSEGSPNWGAVEGRPP) are disordered. Residues 236-263 (CHHCGISAASTPMMRRGPDGPRTLCNAC) form a GATA-type zinc finger.

Belongs to the type IV zinc-finger family. Class C subfamily.

It localises to the nucleus. Its function is as follows. Transcriptional activator that specifically binds 5'-GATA-3' or 5'-GAT-3' motifs within gene promoters. This Oryza sativa subsp. japonica (Rice) protein is GATA transcription factor 17.